We begin with the raw amino-acid sequence, 286 residues long: Lipid phosphate phosphatase epsilon 2, chloroplastic (286 aa).

Residues 1–60 (MAASSSSLLLLHKPTYNFHFAASSVPTYINSARFRISSSIFPLDRRRRRRIWSVSGFKSM) constitute a chloroplast transit peptide. The next 5 helical transmembrane spans lie at 133–149 (LWAV…SVAL), 173–193 (AQSI…WLGT), 194–214 (NVLS…FTWL), 226–246 (VVVG…TWNS), and 260–280 (IALF…VLLN).

This sequence belongs to the PA-phosphatase related phosphoesterase family. Expressed in root tips, root branch points, cotyledons and leaves.

It localises to the plastid. The protein resides in the chloroplast inner membrane. Inhibited by Mg(2+). Its function is as follows. Exhibits phosphatidate phosphatase (PAP) activity in vitro. May play a secondary role as PAP in plastids. The chain is Lipid phosphate phosphatase epsilon 2, chloroplastic (LPPE2) from Arabidopsis thaliana (Mouse-ear cress).